The sequence spans 917 residues: Smoothelin (917 aa).

Position 2 is an N-acetylalanine (alanine 2). Positions 24–89 (LAERRRIRSA…ARLAGQLESM (66 aa)) form a coiled coil. Residues 157-456 (EVPEREEQEQ…AVGTAEPGGS (300 aa)) are disordered. Residues 177-188 (PEGTSQDVTTVT) show a composition bias toward polar residues. 2 stretches are compositionally biased toward low complexity: residues 193–210 (APPG…SSPT) and 220–232 (PAEA…EVPG). Over residues 233–243 (SPEPPPSPPKT) the composition is skewed to pro residues. The segment covering 244–258 (TSPEPQESPTLPSTE) has biased composition (low complexity). The segment covering 298–326 (RSLSVLSPRQPAQNRESTPLASGPSSFQR) has biased composition (polar residues). A phosphoserine mark is found at serine 299, serine 301, and serine 304. Residues 329–338 (SVRDRVHKFT) are compositionally biased toward basic and acidic residues. Serine 341 bears the Phosphoserine mark. Threonine 351 bears the Phosphothreonine mark. Serine 357 carries the post-translational modification Phosphoserine. Residues threonine 360 and threonine 373 each carry the phosphothreonine modification. The segment covering 363–392 (RLLGPSLTSTTPASSSSGSSSRGPSDTSSR) has biased composition (low complexity). Serine 503, serine 514, serine 523, and serine 576 each carry phosphoserine. 2 disordered regions span residues 560-580 (ANGA…PLSA) and 617-767 (QRKR…RKAM). The stretch at 603–630 (EERKLIRAALRELRQRKRDQRDKERERR) forms a coiled coil. Residues 617-640 (QRKRDQRDKERERRLQEARGRPGE) are compositionally biased toward basic and acidic residues. A compositionally biased stretch (polar residues) spans 676–689 (NDGTRTARTTTVES). Over residues 701–720 (STMMQTKTFSSSSSSKKMGS) the composition is skewed to low complexity. Residue serine 729 is modified to Phosphoserine. Basic and acidic residues predominate over residues 738-750 (LEKRQAEKKKELM). Serine 792 carries the phosphoserine modification. A Calponin-homology (CH) domain is found at 799-906 (NSIKQMLLDW…YVQSLYNHLR (108 aa)).

Belongs to the smoothelin family. Smooth muscle; contractile or vascular (for the long form).

It is found in the cytoplasm. It localises to the cytoskeleton. Its function is as follows. Structural protein of the cytoskeleton. This is Smoothelin (SMTN) from Homo sapiens (Human).